The sequence spans 202 residues: Nitrophorin-3 (202 aa).

The signal sequence occupies residues Met-1–Gly-23. Intrachain disulfides connect Cys-25/Cys-144 and Cys-62/Cys-193. His-80 is a binding site for heme.

It belongs to the calycin superfamily. Nitrophorin family. Interacts weakly with host coagulation factor IX (F9) (inactive and activated) in the presence of Ca(2+). As to expression, salivary gland (at protein level).

The protein resides in the secreted. In terms of biological role, heme-based protein that deliver nitric oxide gas (NO) to the victim while feeding, resulting in vasodilation and inhibition of platelet aggregation. Reversibly binds nitric oxide (NO). Also binds tightly to histamine, which is released by the host to induce wound healing. Exhibits weak anticoagulant activity. The polypeptide is Nitrophorin-3 (Rhodnius prolixus (Triatomid bug)).